Consider the following 234-residue polypeptide: 1-(5-phosphoribosyl)-5-[(5-phosphoribosylamino)methylideneamino] imidazole-4-carboxamide isomerase (234 aa).

Asp9 (proton acceptor) is an active-site residue. Asp131 functions as the Proton donor in the catalytic mechanism.

The protein belongs to the HisA/HisF family.

The protein localises to the cytoplasm. The enzyme catalyses 1-(5-phospho-beta-D-ribosyl)-5-[(5-phospho-beta-D-ribosylamino)methylideneamino]imidazole-4-carboxamide = 5-[(5-phospho-1-deoxy-D-ribulos-1-ylimino)methylamino]-1-(5-phospho-beta-D-ribosyl)imidazole-4-carboxamide. It participates in amino-acid biosynthesis; L-histidine biosynthesis; L-histidine from 5-phospho-alpha-D-ribose 1-diphosphate: step 4/9. This chain is 1-(5-phosphoribosyl)-5-[(5-phosphoribosylamino)methylideneamino] imidazole-4-carboxamide isomerase, found in Staphylococcus epidermidis (strain ATCC 35984 / DSM 28319 / BCRC 17069 / CCUG 31568 / BM 3577 / RP62A).